Here is a 133-residue protein sequence, read N- to C-terminus: Ribonuclease VapC17 (133 aa).

Mg(2+) is bound by residues Asp7 and Asp93. The region spanning 30–118 is the PINc domain; that stretch reads AICDIGELEW…HHDRDYKRIA (89 aa).

This sequence belongs to the PINc/VapC protein family. The cofactor is Mg(2+).

Its function is as follows. Toxic component of a type II toxin-antitoxin (TA) system. An RNase. The cognate antitoxin is VapB17. The protein is Ribonuclease VapC17 of Mycobacterium tuberculosis (strain CDC 1551 / Oshkosh).